Consider the following 204-residue polypeptide: dCTP deaminase, dUMP-forming (204 aa).

DCTP is bound by residues 117–122, His128, Gly132, Asp135, 143–145, Gln163, Tyr177, Lys184, and Gln188; these read RSSLGR and TLE. Glu145 (proton donor/acceptor) is an active-site residue.

Homotrimer. Two trimers assemble into a hexamer by stacking on top of each other. Mg(2+) serves as cofactor.

It catalyses the reaction dCTP + 2 H2O = dUMP + NH4(+) + diphosphate. It functions in the pathway pyrimidine metabolism; dUMP biosynthesis; dUMP from dCTP: step 1/1. Its activity is regulated as follows. Inhibited by dTTP. Functionally, bifunctional enzyme that catalyzes both the deamination of dCTP to dUTP and the hydrolysis of dUTP to dUMP without releasing the toxic dUTP intermediate. It also acts as a dUTP diphosphatase with a lower affinity for dUTP than for dCTP. This is dCTP deaminase, dUMP-forming from Methanocaldococcus jannaschii (strain ATCC 43067 / DSM 2661 / JAL-1 / JCM 10045 / NBRC 100440) (Methanococcus jannaschii).